Consider the following 119-residue polypeptide: Ribonuclease P protein component (119 aa).

It belongs to the RnpA family. As to quaternary structure, consists of a catalytic RNA component (M1 or rnpB) and a protein subunit.

It catalyses the reaction Endonucleolytic cleavage of RNA, removing 5'-extranucleotides from tRNA precursor.. Its function is as follows. RNaseP catalyzes the removal of the 5'-leader sequence from pre-tRNA to produce the mature 5'-terminus. It can also cleave other RNA substrates such as 4.5S RNA. The protein component plays an auxiliary but essential role in vivo by binding to the 5'-leader sequence and broadening the substrate specificity of the ribozyme. This Streptococcus pyogenes serotype M12 (strain MGAS2096) protein is Ribonuclease P protein component.